The following is a 115-amino-acid chain: NADH-ubiquinone oxidoreductase chain 3 (115 aa).

3 helical membrane passes run 4-24, 55-75, and 84-104; these read LMVL…AFWL, FFLV…LLPL, and INIM…GLAY.

Belongs to the complex I subunit 3 family. As to quaternary structure, core subunit of respiratory chain NADH dehydrogenase (Complex I) which is composed of 45 different subunits. Interacts with TMEM186. Interacts with TMEM242.

The protein localises to the mitochondrion membrane. It catalyses the reaction a ubiquinone + NADH + 5 H(+)(in) = a ubiquinol + NAD(+) + 4 H(+)(out). Its function is as follows. Core subunit of the mitochondrial membrane respiratory chain NADH dehydrogenase (Complex I) that is believed to belong to the minimal assembly required for catalysis. Complex I functions in the transfer of electrons from NADH to the respiratory chain. The immediate electron acceptor for the enzyme is believed to be ubiquinone. The polypeptide is NADH-ubiquinone oxidoreductase chain 3 (Onychomys leucogaster (Northern grasshopper mouse)).